Reading from the N-terminus, the 309-residue chain is tRNA uridine(34) hydroxylase (309 aa).

Positions 130 to 224 constitute a Rhodanese domain; that stretch reads SDPDTIVIDT…YLEEVPQEES (95 aa). The active-site Cysteine persulfide intermediate is the C184.

It belongs to the TrhO family.

The catalysed reaction is uridine(34) in tRNA + AH2 + O2 = 5-hydroxyuridine(34) in tRNA + A + H2O. Catalyzes oxygen-dependent 5-hydroxyuridine (ho5U) modification at position 34 in tRNAs. The sequence is that of tRNA uridine(34) hydroxylase from Rhizobium leguminosarum bv. trifolii (strain WSM2304).